Reading from the N-terminus, the 742-residue chain is Phosphoribosylformylglycinamidine synthase subunit PurL (742 aa).

The active site involves H54. Y57 and K96 together coordinate ATP. Residue E98 participates in Mg(2+) binding. Substrate contacts are provided by residues 99–102 (SHNH) and R121. The active-site Proton acceptor is H100. Residue D122 coordinates Mg(2+). Substrate is bound at residue Q245. A Mg(2+)-binding site is contributed by D273. Position 317–319 (317–319 (ESQ)) interacts with substrate. D500 and G537 together coordinate ATP. Residue N538 participates in Mg(2+) binding. S540 is a substrate binding site.

This sequence belongs to the FGAMS family. As to quaternary structure, monomer. Part of the FGAM synthase complex composed of 1 PurL, 1 PurQ and 2 PurS subunits.

The protein localises to the cytoplasm. It carries out the reaction N(2)-formyl-N(1)-(5-phospho-beta-D-ribosyl)glycinamide + L-glutamine + ATP + H2O = 2-formamido-N(1)-(5-O-phospho-beta-D-ribosyl)acetamidine + L-glutamate + ADP + phosphate + H(+). It participates in purine metabolism; IMP biosynthesis via de novo pathway; 5-amino-1-(5-phospho-D-ribosyl)imidazole from N(2)-formyl-N(1)-(5-phospho-D-ribosyl)glycinamide: step 1/2. In terms of biological role, part of the phosphoribosylformylglycinamidine synthase complex involved in the purines biosynthetic pathway. Catalyzes the ATP-dependent conversion of formylglycinamide ribonucleotide (FGAR) and glutamine to yield formylglycinamidine ribonucleotide (FGAM) and glutamate. The FGAM synthase complex is composed of three subunits. PurQ produces an ammonia molecule by converting glutamine to glutamate. PurL transfers the ammonia molecule to FGAR to form FGAM in an ATP-dependent manner. PurS interacts with PurQ and PurL and is thought to assist in the transfer of the ammonia molecule from PurQ to PurL. The protein is Phosphoribosylformylglycinamidine synthase subunit PurL of Oceanobacillus iheyensis (strain DSM 14371 / CIP 107618 / JCM 11309 / KCTC 3954 / HTE831).